The following is a 520-amino-acid chain: 2-isopropylmalate synthase (520 aa).

The 263-residue stretch at 12–274 folds into the Pyruvate carboxyltransferase domain; sequence IRIFDTTLRD…DSAINTPRIV (263 aa). Mn(2+) is bound by residues aspartate 21, histidine 209, histidine 211, and asparagine 245. The interval 396 to 520 is regulatory domain; that stretch reads RLASMTISDV…VIAGKTAAVA (125 aa).

This sequence belongs to the alpha-IPM synthase/homocitrate synthase family. LeuA type 1 subfamily. In terms of assembly, homodimer. Requires Mn(2+) as cofactor.

It is found in the cytoplasm. It carries out the reaction 3-methyl-2-oxobutanoate + acetyl-CoA + H2O = (2S)-2-isopropylmalate + CoA + H(+). It participates in amino-acid biosynthesis; L-leucine biosynthesis; L-leucine from 3-methyl-2-oxobutanoate: step 1/4. Catalyzes the condensation of the acetyl group of acetyl-CoA with 3-methyl-2-oxobutanoate (2-ketoisovalerate) to form 3-carboxy-3-hydroxy-4-methylpentanoate (2-isopropylmalate). This Xanthomonas oryzae pv. oryzae (strain MAFF 311018) protein is 2-isopropylmalate synthase.